The chain runs to 513 residues: UDP-N-acetylmuramyl-tripeptide synthetase (513 aa).

S38 lines the UDP-N-acetyl-alpha-D-muramoyl-L-alanyl-D-glutamate pocket. 115–121 (GTKGKTT) serves as a coordination point for ATP. UDP-N-acetyl-alpha-D-muramoyl-L-alanyl-D-glutamate-binding positions include 161 to 162 (TT), S188, and R196. An N6-carboxylysine modification is found at K230.

It belongs to the MurCDEF family. MurE subfamily. In terms of processing, carboxylation is probably crucial for Mg(2+) binding and, consequently, for the gamma-phosphate positioning of ATP.

Its subcellular location is the cytoplasm. It functions in the pathway cell wall biogenesis; peptidoglycan biosynthesis. Catalyzes the addition of an amino acid to the nucleotide precursor UDP-N-acetylmuramoyl-L-alanyl-D-glutamate (UMAG) in the biosynthesis of bacterial cell-wall peptidoglycan. The protein is UDP-N-acetylmuramyl-tripeptide synthetase of Latilactobacillus sakei subsp. sakei (strain 23K) (Lactobacillus sakei subsp. sakei).